We begin with the raw amino-acid sequence, 435 residues long: Methionine aminopeptidase 2 (435 aa).

Residues 1 to 87 are disordered; sequence MAAQVADGVA…TQTKPPRVPV (87 aa). Residues 10–19 are compositionally biased toward basic and acidic residues; it reads ADLKLDDTKS. Polar residues predominate over residues 20 to 29; it reads KPTNGTTQNG. Residues 32–46 are compositionally biased toward acidic residues; the sequence is EHEDSDDDNEGEEGA. Basic residues predominate over residues 55-68; sequence KKKKKRKPRKKKKA. His199 is a substrate binding site. Asp219, Asp230, and His299 together coordinate a divalent metal cation. His307 provides a ligand contact to substrate. Residues Glu332 and Glu427 each contribute to the a divalent metal cation site.

This sequence belongs to the peptidase M24A family. Methionine aminopeptidase eukaryotic type 2 subfamily. Co(2+) is required as a cofactor. Requires Zn(2+) as cofactor. The cofactor is Mn(2+). Fe(2+) serves as cofactor.

Its subcellular location is the cytoplasm. It catalyses the reaction Release of N-terminal amino acids, preferentially methionine, from peptides and arylamides.. Functionally, cotranslationally removes the N-terminal methionine from nascent proteins. The N-terminal methionine is often cleaved when the second residue in the primary sequence is small and uncharged (Met-Ala-, Cys, Gly, Pro, Ser, Thr, or Val). This chain is Methionine aminopeptidase 2, found in Phaeosphaeria nodorum (strain SN15 / ATCC MYA-4574 / FGSC 10173) (Glume blotch fungus).